The chain runs to 603 residues: Cell division control protein 48 homolog B (603 aa).

ATP is bound by residues 63–70 and 327–334; these read GPPGTGKT and GPPGCSKT.

Belongs to the AAA ATPase family.

It is found in the nucleus. The protein localises to the cytoplasm. It localises to the cytoskeleton. The protein resides in the phragmoplast. Probably functions in cell division and growth processes. Interacts with certain SNAREs as part of specialized membrane fusion events where vesicles from the same organelle fuse (homotypic fusion). The protein is Cell division control protein 48 homolog B (CDC48B) of Arabidopsis thaliana (Mouse-ear cress).